The chain runs to 366 residues: Ribosomal RNA large subunit methyltransferase M (366 aa).

S-adenosyl-L-methionine is bound by residues serine 188, 221-224 (CPGG), aspartate 240, aspartate 260, and aspartate 277. Lysine 306 (proton acceptor) is an active-site residue.

The protein belongs to the class I-like SAM-binding methyltransferase superfamily. RNA methyltransferase RlmE family. RlmM subfamily. Monomer.

The protein resides in the cytoplasm. It catalyses the reaction cytidine(2498) in 23S rRNA + S-adenosyl-L-methionine = 2'-O-methylcytidine(2498) in 23S rRNA + S-adenosyl-L-homocysteine + H(+). Its function is as follows. Catalyzes the 2'-O-methylation at nucleotide C2498 in 23S rRNA. This is Ribosomal RNA large subunit methyltransferase M from Salmonella heidelberg (strain SL476).